A 236-amino-acid chain; its full sequence is tRNA (guanine-N(7)-)-methyltransferase (236 aa).

Residues aspartate 35, glutamate 60, asparagine 87, and aspartate 113 each contribute to the S-adenosyl-L-methionine site. Aspartate 113 is an active-site residue. Substrate contacts are provided by lysine 117 and aspartate 149. The interval glutamate 217–alanine 236 is disordered.

It belongs to the class I-like SAM-binding methyltransferase superfamily. TrmB family.

The catalysed reaction is guanosine(46) in tRNA + S-adenosyl-L-methionine = N(7)-methylguanosine(46) in tRNA + S-adenosyl-L-homocysteine. Its pathway is tRNA modification; N(7)-methylguanine-tRNA biosynthesis. In terms of biological role, catalyzes the formation of N(7)-methylguanine at position 46 (m7G46) in tRNA. The sequence is that of tRNA (guanine-N(7)-)-methyltransferase from Synechococcus sp. (strain CC9902).